Consider the following 363-residue polypeptide: Ribonuclease P protein subunit p40 (363 aa).

As to quaternary structure, component of nuclear RNase P and RNase MRP ribonucleoproteins. RNase P consists of a catalytic RNA moiety and about 10 protein subunits; POP1, POP4, POP5, POP7, RPP14, RPP21, RPP25, RPP30, RPP38 and RPP40. Within the RNase P complex, POP1, POP7 and RPP25 form the 'finger' subcomplex, POP5, RPP14, RPP40 and homodimeric RPP30 form the 'palm' subcomplex, and RPP21, POP4 and RPP38 form the 'wrist' subcomplex. All subunits of the RNase P complex interact with the catalytic RNA. Several subunits of RNase P are also part of the RNase MRP complex. RNase MRP consists of a catalytic RNA moiety and about 8 protein subunits; POP1, POP7, RPP25, RPP30, RPP38, RPP40 and possibly also POP4 and POP5.

The protein resides in the nucleus. It localises to the nucleolus. Component of ribonuclease P, a ribonucleoprotein complex that generates mature tRNA molecules by cleaving their 5'-ends. Also a component of the MRP ribonuclease complex, which cleaves pre-rRNA sequences. The protein is Ribonuclease P protein subunit p40 (RPP40) of Homo sapiens (Human).